The primary structure comprises 394 residues: Elongation factor Tu (394 aa).

The region spanning 10-204 (KPHINVGTIG…ALDKYIPEPQ (195 aa)) is the tr-type G domain. Residues 19 to 26 (GHVDHGKT) are G1. 19 to 26 (GHVDHGKT) contributes to the GTP binding site. Thr-26 serves as a coordination point for Mg(2+). The segment at 60–64 (GITIN) is G2. A G3 region spans residues 81–84 (DCPG). GTP is bound by residues 81–85 (DCPGH) and 136–139 (NKCD). Residues 136-139 (NKCD) form a G4 region. The tract at residues 174-176 (SAL) is G5.

The protein belongs to the TRAFAC class translation factor GTPase superfamily. Classic translation factor GTPase family. EF-Tu/EF-1A subfamily. Monomer.

It is found in the cytoplasm. The enzyme catalyses GTP + H2O = GDP + phosphate + H(+). In terms of biological role, GTP hydrolase that promotes the GTP-dependent binding of aminoacyl-tRNA to the A-site of ribosomes during protein biosynthesis. This is Elongation factor Tu from Hamiltonella defensa subsp. Acyrthosiphon pisum (strain 5AT).